We begin with the raw amino-acid sequence, 306 residues long: Mitochondrial uncoupling protein 1 (306 aa).

3 Solcar repeats span residues Leu9–Leu102, Val112–Thr203, and Asp212–Tyr296. 6 consecutive transmembrane segments (helical) span residues Phe15–Ala35, Leu71–Leu91, Ile118–Val138, Thr177–Tyr197, Ile218–Val238, and Tyr269–Thr289.

Belongs to the mitochondrial carrier (TC 2.A.29) family. As to expression, widely expressed.

It is found in the mitochondrion inner membrane. Its function is as follows. PUMPS are mitochondrial transporter proteins that create proton leaks across the inner mitochondrial membrane, thus uncoupling oxidative phosphorylation. This leads to a decrease in the efficiency of oxidative phosphorylation and an increase in heat production. Is involved in protecting plant cells against oxidative stress damage and maintaining the redox balance of the mitochondrial electron transport chain to facilitate photosynthetic metabolism. May play a regulatory role during photorespiration. In Arabidopsis thaliana (Mouse-ear cress), this protein is Mitochondrial uncoupling protein 1 (PUMP1).